Reading from the N-terminus, the 416-residue chain is Probable pectate lyase 8 (416 aa).

The first 24 residues, 1–24 (MAVTKLILFASALLLTALFIGVNA), serve as a signal peptide directing secretion. 3 N-linked (GlcNAc...) asparagine glycosylation sites follow: Asn23, Asn28, and Asn52. Positions 214, 238, and 242 each coordinate Ca(2+). Arg294 is a catalytic residue.

It belongs to the polysaccharide lyase 1 family. It depends on Ca(2+) as a cofactor.

The enzyme catalyses Eliminative cleavage of (1-&gt;4)-alpha-D-galacturonan to give oligosaccharides with 4-deoxy-alpha-D-galact-4-enuronosyl groups at their non-reducing ends.. Its pathway is glycan metabolism; pectin degradation; 2-dehydro-3-deoxy-D-gluconate from pectin: step 2/5. This Arabidopsis thaliana (Mouse-ear cress) protein is Probable pectate lyase 8.